The following is a 194-amino-acid chain: Probable proteasome subunit beta type-4 (194 aa).

Belongs to the peptidase T1B family. The 26S proteasome consists of a 20S proteasome core and two 19S regulatory subunits. The 20S proteasome core is composed of 28 subunits that are arranged in four stacked rings, resulting in a barrel-shaped structure. The two end rings are each formed by seven alpha subunits, and the two central rings are each formed by seven beta subunits. The catalytic chamber with the active sites is on the inside of the barrel.

It is found in the cytoplasm. The protein localises to the nucleus. Non-catalytic component of the proteasome, a multicatalytic proteinase complex which is characterized by its ability to cleave peptides with Arg, Phe, Tyr, Leu, and Glu adjacent to the leaving group at neutral or slightly basic pH. The proteasome has an ATP-dependent proteolytic activity. This is Probable proteasome subunit beta type-4 from Schizosaccharomyces pombe (strain 972 / ATCC 24843) (Fission yeast).